Consider the following 207-residue polypeptide: Probable nicotinate-nucleotide adenylyltransferase (207 aa).

This sequence belongs to the NadD family.

The enzyme catalyses nicotinate beta-D-ribonucleotide + ATP + H(+) = deamido-NAD(+) + diphosphate. It functions in the pathway cofactor biosynthesis; NAD(+) biosynthesis; deamido-NAD(+) from nicotinate D-ribonucleotide: step 1/1. Catalyzes the reversible adenylation of nicotinate mononucleotide (NaMN) to nicotinic acid adenine dinucleotide (NaAD). This chain is Probable nicotinate-nucleotide adenylyltransferase, found in Synechococcus sp. (strain JA-3-3Ab) (Cyanobacteria bacterium Yellowstone A-Prime).